We begin with the raw amino-acid sequence, 260 residues long: Lysozyme D (260 aa).

The N-terminal stretch at 1–19 (MRLLVTLILLIFVLTVSGQ) is a signal peptide. Residues 83-148 (GSTTTGGTGS…SGGSSGSGSG (66 aa)) are disordered. Gly residues-rich tracts occupy residues 101–119 (SGSGSGSGSGSGSGSGSGT) and 129–147 (SGSGSGSSSGSGGSSGSGS).

The protein belongs to the dictyostelium lysozyme family. Post-translationally, contains disulfide bonds.

The protein localises to the cytoplasmic vesicle lumen. The catalysed reaction is Hydrolysis of (1-&gt;4)-beta-linkages between N-acetylmuramic acid and N-acetyl-D-glucosamine residues in a peptidoglycan and between N-acetyl-D-glucosamine residues in chitodextrins.. In terms of biological role, has antibacterial activity. The chain is Lysozyme D (alyD-1) from Dictyostelium discoideum (Social amoeba).